The sequence spans 180 residues: ATP-dependent protease subunit HslV (180 aa).

Threonine 6 is an active-site residue. 3 residues coordinate Na(+): alanine 164, cysteine 167, and threonine 170.

This sequence belongs to the peptidase T1B family. HslV subfamily. A double ring-shaped homohexamer of HslV is capped on each side by a ring-shaped HslU homohexamer. The assembly of the HslU/HslV complex is dependent on binding of ATP.

Its subcellular location is the cytoplasm. It catalyses the reaction ATP-dependent cleavage of peptide bonds with broad specificity.. Its activity is regulated as follows. Allosterically activated by HslU binding. Its function is as follows. Protease subunit of a proteasome-like degradation complex believed to be a general protein degrading machinery. This Borrelia turicatae (strain 91E135) protein is ATP-dependent protease subunit HslV.